The following is a 440-amino-acid chain: tRNA modification GTPase MnmE (440 aa).

(6S)-5-formyl-5,6,7,8-tetrahydrofolate-binding residues include R34, E94, and R134. The 139-residue stretch at 229 to 367 (GVRVVLAGPP…LVALLLDRAA (139 aa)) folds into the TrmE-type G domain. N239 serves as a coordination point for K(+). GTP is bound by residues 239 to 244 (NAGKST), 258 to 264 (TPIAGTT), 283 to 286 (DTAG), and 348 to 350 (SAR). S243 serves as a coordination point for Mg(2+). T258, I260, and T263 together coordinate K(+). T264 lines the Mg(2+) pocket. Residue K440 participates in (6S)-5-formyl-5,6,7,8-tetrahydrofolate binding.

The protein belongs to the TRAFAC class TrmE-Era-EngA-EngB-Septin-like GTPase superfamily. TrmE GTPase family. In terms of assembly, homodimer. Heterotetramer of two MnmE and two MnmG subunits. It depends on K(+) as a cofactor.

The protein resides in the cytoplasm. Its function is as follows. Exhibits a very high intrinsic GTPase hydrolysis rate. Involved in the addition of a carboxymethylaminomethyl (cmnm) group at the wobble position (U34) of certain tRNAs, forming tRNA-cmnm(5)s(2)U34. In Rhizorhabdus wittichii (strain DSM 6014 / CCUG 31198 / JCM 15750 / NBRC 105917 / EY 4224 / RW1) (Sphingomonas wittichii), this protein is tRNA modification GTPase MnmE.